The primary structure comprises 130 residues: Anti-adapter protein IraD (130 aa).

This sequence belongs to the GpW/Gp25 family. IraD subfamily. Interacts with RssB.

It localises to the cytoplasm. Inhibits RpoS proteolysis by regulating RssB activity, thereby increasing the stability of the sigma stress factor RpoS during oxidative stress. Its effect on RpoS stability is due to its interaction with RssB, which probably blocks the interaction of RssB with RpoS, and the consequent delivery of the RssB-RpoS complex to the ClpXP protein degradation pathway. This is Anti-adapter protein IraD from Escherichia coli O45:K1 (strain S88 / ExPEC).